The following is a 229-amino-acid chain: Cytidylate kinase (229 aa).

10 to 18 (GYSSCGKST) contacts ATP.

This sequence belongs to the cytidylate kinase family. Type 1 subfamily.

The protein resides in the cytoplasm. The enzyme catalyses CMP + ATP = CDP + ADP. It catalyses the reaction dCMP + ATP = dCDP + ADP. The chain is Cytidylate kinase from Phocaeicola vulgatus (strain ATCC 8482 / DSM 1447 / JCM 5826 / CCUG 4940 / NBRC 14291 / NCTC 11154) (Bacteroides vulgatus).